The sequence spans 44 residues: Cytochrome b559 subunit beta (44 aa).

The helical transmembrane segment at 19 to 35 threads the bilayer; it reads WLSVHALAVPTVFFIGA. Histidine 23 lines the heme pocket.

Belongs to the PsbE/PsbF family. In terms of assembly, heterodimer of an alpha subunit and a beta subunit. PSII is composed of 1 copy each of membrane proteins PsbA, PsbB, PsbC, PsbD, PsbE, PsbF, PsbH, PsbI, PsbJ, PsbK, PsbL, PsbM, PsbT, PsbX, PsbY, PsbZ, Psb30/Ycf12, peripheral proteins PsbO, CyanoQ (PsbQ), PsbU, PsbV and a large number of cofactors. It forms dimeric complexes. The cofactor is heme b.

It is found in the cellular thylakoid membrane. In terms of biological role, this b-type cytochrome is tightly associated with the reaction center of photosystem II (PSII). PSII is a light-driven water:plastoquinone oxidoreductase that uses light energy to abstract electrons from H(2)O, generating O(2) and a proton gradient subsequently used for ATP formation. It consists of a core antenna complex that captures photons, and an electron transfer chain that converts photonic excitation into a charge separation. The chain is Cytochrome b559 subunit beta from Rippkaea orientalis (strain PCC 8801 / RF-1) (Cyanothece sp. (strain PCC 8801)).